Here is a 618-residue protein sequence, read N- to C-terminus: Kelch-like protein 40b (618 aa).

A BTB domain is found at Val-33–Glu-100. Residues Cys-135 to Glu-237 enclose the BACK domain. The span at Pro-264–Asp-284 shows a compositional bias: basic and acidic residues. The disordered stretch occupies residues Pro-264–Arg-297. The span at Glu-285 to Glu-295 shows a compositional bias: acidic residues. Kelch repeat units follow at residues Gln-356–Asn-408, Phe-409–Glu-458, Met-459–Asn-506, Ile-508–Gly-553, and Leu-555–Val-608.

Belongs to the KLHL40 family. As to quaternary structure, component of the BCR(KLHL40) E3 ubiquitin ligase complex. In terms of tissue distribution, expressed in skeletal muscle. Detected in the eye at much lower levels.

Its subcellular location is the cytoplasm. It is found in the myofibril. It localises to the sarcomere. The protein localises to the a band. The protein resides in the i band. Substrate-specific adapter of a BCR (BTB-CUL3-RBX1) E3 ubiquitin ligase complex. Required for skeletal muscle development. The chain is Kelch-like protein 40b (klhl40b) from Danio rerio (Zebrafish).